A 202-amino-acid polypeptide reads, in one-letter code: Small ribosomal subunit protein uS4 (202 aa).

The span at 1 to 13 (MSRYRGPRLRITR) shows a compositional bias: basic residues. The tract at residues 1–43 (MSRYRGPRLRITRRLGDLPGLTRKAAKRSHPPGQHGQARRKRS) is disordered. Positions 90-152 (NRLDNVCFRL…KGSKKLAEAN (63 aa)) constitute an S4 RNA-binding domain.

The protein belongs to the universal ribosomal protein uS4 family. As to quaternary structure, part of the 30S ribosomal subunit. Contacts protein S5. The interaction surface between S4 and S5 is involved in control of translational fidelity.

Its function is as follows. One of the primary rRNA binding proteins, it binds directly to 16S rRNA where it nucleates assembly of the body of the 30S subunit. Functionally, with S5 and S12 plays an important role in translational accuracy. The polypeptide is Small ribosomal subunit protein uS4 (Prochlorococcus marinus (strain MIT 9303)).